Consider the following 347-residue polypeptide: GMP reductase (347 aa).

Alanine 108–alanine 131 lines the NADP(+) pocket. Glycine 181 and glycine 183 together coordinate K(+). The active-site Thioimidate intermediate is cysteine 186. Position 216 to 239 (isoleucine 216 to valine 239) interacts with NADP(+).

It belongs to the IMPDH/GMPR family. GuaC type 1 subfamily. As to quaternary structure, homotetramer.

The catalysed reaction is IMP + NH4(+) + NADP(+) = GMP + NADPH + 2 H(+). In terms of biological role, catalyzes the irreversible NADPH-dependent deamination of GMP to IMP. It functions in the conversion of nucleobase, nucleoside and nucleotide derivatives of G to A nucleotides, and in maintaining the intracellular balance of A and G nucleotides. In Citrobacter koseri (strain ATCC BAA-895 / CDC 4225-83 / SGSC4696), this protein is GMP reductase.